Here is a 224-residue protein sequence, read N- to C-terminus: 7-cyano-7-deazaguanine synthase (224 aa).

10–20 lines the ATP pocket; the sequence is LSGGLDSATVV. C189, C199, C202, and C205 together coordinate Zn(2+).

This sequence belongs to the QueC family. The cofactor is Zn(2+).

The enzyme catalyses 7-carboxy-7-deazaguanine + NH4(+) + ATP = 7-cyano-7-deazaguanine + ADP + phosphate + H2O + H(+). It functions in the pathway purine metabolism; 7-cyano-7-deazaguanine biosynthesis. In terms of biological role, catalyzes the ATP-dependent conversion of 7-carboxy-7-deazaguanine (CDG) to 7-cyano-7-deazaguanine (preQ(0)). This chain is 7-cyano-7-deazaguanine synthase, found in Pseudomonas putida (strain ATCC 47054 / DSM 6125 / CFBP 8728 / NCIMB 11950 / KT2440).